The chain runs to 349 residues: Ferredoxin--NADP reductase (349 aa).

FAD is bound by residues Asp-43, Gln-51, Tyr-56, Val-96, Phe-131, Asp-295, and Ser-336.

It belongs to the ferredoxin--NADP reductase type 2 family. In terms of assembly, homodimer. It depends on FAD as a cofactor.

It carries out the reaction 2 reduced [2Fe-2S]-[ferredoxin] + NADP(+) + H(+) = 2 oxidized [2Fe-2S]-[ferredoxin] + NADPH. In Paraburkholderia phytofirmans (strain DSM 17436 / LMG 22146 / PsJN) (Burkholderia phytofirmans), this protein is Ferredoxin--NADP reductase.